A 154-amino-acid chain; its full sequence is 3-hydroxyacyl-[acyl-carrier-protein] dehydratase FabZ (154 aa).

The active site involves histidine 55.

This sequence belongs to the thioester dehydratase family. FabZ subfamily.

The protein localises to the cytoplasm. The catalysed reaction is a (3R)-hydroxyacyl-[ACP] = a (2E)-enoyl-[ACP] + H2O. Involved in unsaturated fatty acids biosynthesis. Catalyzes the dehydration of short chain beta-hydroxyacyl-ACPs and long chain saturated and unsaturated beta-hydroxyacyl-ACPs. In Nitratidesulfovibrio vulgaris (strain ATCC 29579 / DSM 644 / CCUG 34227 / NCIMB 8303 / VKM B-1760 / Hildenborough) (Desulfovibrio vulgaris), this protein is 3-hydroxyacyl-[acyl-carrier-protein] dehydratase FabZ.